The primary structure comprises 229 residues: Ribonuclease 3 (229 aa).

An RNase III domain is found at 5–127; sequence LDRLERKLGY…LIGAIYLDTG (123 aa). E40 is a Mg(2+) binding site. D44 is a catalytic residue. Positions 113 and 116 each coordinate Mg(2+). The active site involves E116. Residues 154–224 enclose the DRBM domain; that stretch reads DPKTRLQEFL…AAAALVALGV (71 aa).

The protein belongs to the ribonuclease III family. Homodimer. The cofactor is Mg(2+).

It is found in the cytoplasm. The catalysed reaction is Endonucleolytic cleavage to 5'-phosphomonoester.. Functionally, digests double-stranded RNA. Involved in the processing of primary rRNA transcript to yield the immediate precursors to the large and small rRNAs (23S and 16S). Processes some mRNAs, and tRNAs when they are encoded in the rRNA operon. Processes pre-crRNA and tracrRNA of type II CRISPR loci if present in the organism. The polypeptide is Ribonuclease 3 (Pseudomonas paraeruginosa (strain DSM 24068 / PA7) (Pseudomonas aeruginosa (strain PA7))).